The following is a 671-amino-acid chain: Vinexin (671 aa).

Position 2 is an N-acetylalanine (glutamine 2). Arginine 6 bears the Phosphoserine mark. Disordered stretches follow at residues 46–111, 166–215, 249–268, 295–324, and 337–383; these read LNFQ…TKDS, TFEE…RPGA, LETGQRPKKPLVDDPGEKPS, TRLPSPKSSPAPRRAPEQRPPAGPASAWSS, and SLSP…KKRK. Residues 88–108 are compositionally biased toward polar residues; it reads PSASTKIPASQHTQNWSATWT. The SoHo domain occupies 115-187; the sequence is DKRWVKYEGI…GAQQRPAHRP (73 aa). A Phosphoserine modification is found at serine 348. Over residues 359–368 the composition is skewed to polar residues; the sequence is PSSTRDPSAS. SH3 domains follow at residues 380–439 and 454–515; these read KKRK…VLPA and LEYG…VSRE. The segment at 380–515 is binds to vinculin; that stretch reads KKRKAARLKF…PASYVQVSRE (136 aa). Serine 395 carries the post-translational modification Phosphoserine. Residues 519-611 are disordered; that stretch reads RLCDDGPQLP…LGTSSPNTSQ (93 aa). Residue serine 530 is modified to Phosphoserine; by MAPK1. The span at 535–553 shows a compositional bias: low complexity; sequence AAARSARHPSSPSALRSPA. Phosphoserine is present on residues serine 544, serine 545, serine 547, serine 551, and serine 563. Residues 560 to 584 are compositionally biased toward polar residues; that stretch reads GQTSPRRTGFSFPTQEPRPQTQNLG. In terms of domain architecture, SH3 3 spans 612–671; it reads IHWTPYRAMYQYRPQNEDELELREGDRVDVMQQCDDGWFVGVSRRTQKFGTFPGNYVAPV. The interval 612–671 is binds to SOS; it reads IHWTPYRAMYQYRPQNEDELELREGDRVDVMQQCDDGWFVGVSRRTQKFGTFPGNYVAPV.

In terms of assembly, interacts with DLG5 through its third SH3 domain. Interacts with vinculin by the first two SH3 domains and the proline rich region of vinculin. Binds to SOS (guanine nucleotide exchange factor of RAS and RAC), through its third SH3 domain. The formation of this complex is down-regulated by phosphorylation of SOS. Interacts with INPPL1/SHIP2, SAFB2, SOCS7 and SRCIN1. Interacts with FASLG. Interacts with MAPK1/ERK2. Phosphorylated at Ser-530 by MAPK1/ERK2 during cell spreading. As to expression, both isoforms are expressed in different tissues like heart, placenta, brain, skeletal muscle and pancreas. Isoform beta is especially found in liver.

Its subcellular location is the cell junction. It localises to the cytoplasm. It is found in the cytoskeleton. The protein localises to the nucleus. Vinexin alpha isoform promotes up-regulation of actin stress fiber formation. Vinexin beta isoform plays a role in cell spreading and enhances the activation of JNK/SAPK in response to EGF stimulation by using its third SH3 domain. The chain is Vinexin (SORBS3) from Homo sapiens (Human).